Here is a 253-residue protein sequence, read N- to C-terminus: Methionine-R-sulfoxide reductase B3, mitochondrial (253 aa).

Positions 1–56 (MPPAAPSVARSREGGGIGQRRLVFPKSARRTLPCPIALCLGLCLAAAAATTTRASA) are cleaved as a signal peptide. Residue Lys102 is modified to N6-acetyllysine. The MsrB domain maps to 107 to 229 (QQELRKRLTP…NSASLSFTPA (123 aa)). Cys146, Cys149, Cys195, and Cys198 together coordinate Zn(2+). Cys218 (nucleophile) is an active-site residue. The disordered stretch occupies residues 227–253 (TPADSSEAEGSGIKESGSPAAADRAEL). Ser244 bears the Phosphoserine mark. Positions 250–253 (RAEL) match the Endoplasmic reticulum retention signal motif.

It belongs to the MsrB Met sulfoxide reductase family. In terms of assembly, monomer. Zn(2+) serves as cofactor. As to expression, widely expressed. Detected in the sensory epithelia of the organ of Corti and vestibular end organs as early as P2 up to adulthood (at protein level). In the organ of Corti, present in inner and outer hair cells and, to a lesser extent, in supporting cells (at protein level). In hair cells, distributed throughout the cell body. Barely detectable level in stereocilia. Also observed in spiral ganglion neurons, but not in the stria vascularis. In the vestibular end organs, found throughout the sensory epithelium, but more intense expression in hair cells than in supporting cells (at protein level). In vestibular hair cells, present within cell bodies and to a lesser extent in kinocilia. Barely detectable in stereocilia.

It localises to the endoplasmic reticulum. The enzyme catalyses L-methionyl-[protein] + [thioredoxin]-disulfide + H2O = L-methionyl-(R)-S-oxide-[protein] + [thioredoxin]-dithiol. The catalysed reaction is [thioredoxin]-disulfide + L-methionine + H2O = L-methionine (R)-S-oxide + [thioredoxin]-dithiol. Functionally, catalyzes the reduction of free and protein-bound methionine sulfoxide to methionine. In Mus musculus (Mouse), this protein is Methionine-R-sulfoxide reductase B3, mitochondrial (Msrb3).